Here is a 68-residue protein sequence, read N- to C-terminus: MKKVSLGKIIESTVEDKYTYRFVRDQKKPNLGEYYKTFESIRAGQHSSTYDVVGKRDYTVVDKLVKKC.

This is an uncharacterized protein from Orgyia pseudotsugata (Douglas-fir tussock moth).